A 593-amino-acid chain; its full sequence is Uroporphyrinogen-III C-methyltransferase (593 aa).

A disordered region spans residues Glu-278–Asn-303.

Belongs to the precorrin methyltransferase family.

The catalysed reaction is uroporphyrinogen III + 2 S-adenosyl-L-methionine = precorrin-2 + 2 S-adenosyl-L-homocysteine + H(+). In terms of biological role, siroheme synthase involved in methionine biosynthesis. This chain is Uroporphyrinogen-III C-methyltransferase, found in Saccharomyces cerevisiae (strain ATCC 204508 / S288c) (Baker's yeast).